We begin with the raw amino-acid sequence, 89 residues long: Small ribosomal subunit protein uS15 (89 aa).

This sequence belongs to the universal ribosomal protein uS15 family. In terms of assembly, part of the 30S ribosomal subunit. Forms a bridge to the 50S subunit in the 70S ribosome, contacting the 23S rRNA.

Its function is as follows. One of the primary rRNA binding proteins, it binds directly to 16S rRNA where it helps nucleate assembly of the platform of the 30S subunit by binding and bridging several RNA helices of the 16S rRNA. In terms of biological role, forms an intersubunit bridge (bridge B4) with the 23S rRNA of the 50S subunit in the ribosome. The sequence is that of Small ribosomal subunit protein uS15 from Ralstonia nicotianae (strain ATCC BAA-1114 / GMI1000) (Ralstonia solanacearum).